A 163-amino-acid polypeptide reads, in one-letter code: MEKRILGLDPGLATLGFGVITCTQIANKVPETTVNMLDFGVIKTSADVEMGLRLCTLFDDLHTVMEEFQPDLVAIEKLFFYRMSSTILVAQARGVLILVLGQRRLPYVEFTPAQIKQALTGYGNADKLDVQEAVARELDLDEIPKPDDAADALAVALTASYQL.

Active-site residues include D9, E76, and D148. D9, E76, and D148 together coordinate Mg(2+).

It belongs to the RuvC family. Homodimer which binds Holliday junction (HJ) DNA. The HJ becomes 2-fold symmetrical on binding to RuvC with unstacked arms; it has a different conformation from HJ DNA in complex with RuvA. In the full resolvosome a probable DNA-RuvA(4)-RuvB(12)-RuvC(2) complex forms which resolves the HJ. Mg(2+) is required as a cofactor.

The protein resides in the cytoplasm. It catalyses the reaction Endonucleolytic cleavage at a junction such as a reciprocal single-stranded crossover between two homologous DNA duplexes (Holliday junction).. Its function is as follows. The RuvA-RuvB-RuvC complex processes Holliday junction (HJ) DNA during genetic recombination and DNA repair. Endonuclease that resolves HJ intermediates. Cleaves cruciform DNA by making single-stranded nicks across the HJ at symmetrical positions within the homologous arms, yielding a 5'-phosphate and a 3'-hydroxyl group; requires a central core of homology in the junction. The consensus cleavage sequence is 5'-(A/T)TT(C/G)-3'. Cleavage occurs on the 3'-side of the TT dinucleotide at the point of strand exchange. HJ branch migration catalyzed by RuvA-RuvB allows RuvC to scan DNA until it finds its consensus sequence, where it cleaves and resolves the cruciform DNA. The protein is Crossover junction endodeoxyribonuclease RuvC of Nostoc punctiforme (strain ATCC 29133 / PCC 73102).